Reading from the N-terminus, the 147-residue chain is Hemoglobin subunit gamma (147 aa).

In terms of domain architecture, Globin spans 3–147 (HFTAEEKAII…VATALAHKYH (145 aa)). Heme b contacts are provided by H64 and H93.

Belongs to the globin family. Heterotetramer of two alpha chains and two gamma chains in fetal hemoglobin (Hb F). In terms of tissue distribution, red blood cells.

Gamma chains make up the fetal hemoglobin F, in combination with alpha chains. The sequence is that of Hemoglobin subunit gamma (HBG) from Otolemur crassicaudatus (Brown greater galago).